The sequence spans 718 residues: Sodium/myo-inositol cotransporter (718 aa).

The Extracellular portion of the chain corresponds to 1-9; sequence MRAVLDTAD. A helical transmembrane segment spans residues 10–29; the sequence is IAIVALYFILVMCIGFFAMW. Residues 30 to 38 are Cytoplasmic-facing; it reads KSNRSTVSG. The chain crosses the membrane as a helical span at residues 39-57; it reads YFLAGRSMTWVAIGASLFV. At 58 to 86 the chain is on the extracellular side; that stretch reads SNIGSEHFIGLAGSGAASGFAVGAWEFNA. Residues 87–110 form a helical membrane-spanning segment; that stretch reads LLLLQLLGWVFIPIYIRSGVYTMP. At 111–123 the chain is on the cytoplasmic side; sequence EYLSKRFGGHRIQ. A helical membrane pass occupies residues 124 to 144; it reads VYFAALSLILYIFTKLSVDLY. Residues 145-157 are Extracellular-facing; the sequence is SGALFIQESLGWN. A helical transmembrane segment spans residues 158–183; it reads LYVSVILLIGMTALLTVTGGLVAVIY. Topologically, residues 184–186 are cytoplasmic; it reads TDT. The helical transmembrane segment at 187 to 205 threads the bilayer; it reads LQALLMIIGALTLMIISIM. Residues 206–303 are Extracellular-facing; that stretch reads EIGGFEEVKR…HAKGSTLMAG (98 aa). Asparagine 232 carries N-linked (GlcNAc...) asparagine glycosylation. A helical membrane pass occupies residues 304–324; the sequence is FLKLLPMFIIVVPGMISRILF. Over 325–353 the chain is Cytoplasmic; it reads TDDIACINPEHCMLVCGSRAGCSNIAYPR. A helical membrane pass occupies residues 354-376; it reads LVMKLVPVGLRGLMMAVMIAALM. The Extracellular segment spans residues 377 to 406; it reads SDLDSIFNSASTIFTLDVYKLIRKSASSRE. The helical transmembrane segment at 407 to 430 threads the bilayer; the sequence is LMIVGRIFVAFMVVISIAWVPIIV. Residues 431 to 443 lie on the Cytoplasmic side of the membrane; sequence EMQGGQMYLYIQE. Residues 444 to 462 traverse the membrane as a helical segment; the sequence is VADYLTPPVAALFLLAIFW. The Extracellular segment spans residues 463–510; it reads KRCNEQGAFYGGMAGFVLGAVRLILAFAYRAPECDQPDNRPGFIKDIH. Residues 511–532 traverse the membrane as a helical segment; the sequence is YMYVATGLFWVTGLITVIVSLL. Residues 533-695 lie on the Cytoplasmic side of the membrane; it reads TPPPTKEQIR…QMLEETRQVK (163 aa). Serine 594 and serine 632 each carry phosphoserine. A helical membrane pass occupies residues 696–716; it reads VILNIGLFAVCSLGIFMFVYF. The Extracellular portion of the chain corresponds to 717-718; sequence SL.

It belongs to the sodium:solute symporter (SSF) (TC 2.A.21) family. Interacts with KCNQ2 (via the pore module). Interacts with KCNQ1; this interaction is direct. Forms coregulatory complexes with ion channels KCNQ2-KCNQ3 and KCNQ1-KCNE2.

Its subcellular location is the apical cell membrane. It is found in the basolateral cell membrane. The catalysed reaction is myo-inositol(out) + 2 Na(+)(out) = myo-inositol(in) + 2 Na(+)(in). It catalyses the reaction scyllo-inositol(out) + 2 Na(+)(out) = scyllo-inositol(in) + 2 Na(+)(in). Electrogenic Na(+)-coupled sugar symporter that actively transports myo-inositol and its stereoisomer scyllo-inositol across the plasma membrane, with a Na(+) to sugar coupling ratio of 2:1. Maintains myo-inositol concentration gradient that defines cell volume and fluid balance during osmotic stress, in particular in the fetoplacental unit and central nervous system. Forms coregulatory complexes with voltage-gated K(+) ion channels, allosterically altering ion selectivity, voltage dependence and gating kinetics of the channel. In turn, K(+) efflux through the channel forms a local electrical gradient that modulates electrogenic Na(+)-coupled myo-inositol influx through the transporter. Associates with KCNQ1-KCNE2 channel in the apical membrane of choroid plexus epithelium and regulates the myo-inositol gradient between blood and cerebrospinal fluid with an impact on neuron excitability. Associates with KCNQ2-KCNQ3 channel altering ion selectivity, increasing Na(+) and Cs(+) permeation relative to K(+) permeation. Provides myo-inositol precursor for biosynthesis of phosphoinositides such as PI(4,5)P2, thus indirectly affecting the activity of phosphoinositide-dependent ion channels and Ca(2+) signaling upon osmotic stress. The sequence is that of Sodium/myo-inositol cotransporter from Homo sapiens (Human).